A 236-amino-acid polypeptide reads, in one-letter code: Syntaxin-8 (236 aa).

Topologically, residues 1–215 (MAPDPWFSTY…MVDRKSASCG (215 aa)) are cytoplasmic. A coiled-coil region spans residues 42–65 (VTIRALLQNLKEKIALLKDLLLRA). The t-SNARE coiled-coil homology domain occupies 145–207 (QKIIQEQDAG…RNETRRVNMV (63 aa)). A Phosphoserine modification is found at Ser-160. The chain crosses the membrane as a helical; Anchor for type IV membrane protein span at residues 216-232 (MIMVILLLLVAIVVVAV). Residues 233–236 (WPTN) are Vesicular-facing.

It belongs to the syntaxin family. Forms a SNARE complex with STX7, VTI1B and VAMP8 which functions in the homotypic fusion of late endosomes. Part of the SNARE core complex containing STX7, VAMP8 and VTI1B. Interacts with VAMP8. Interacts with HECTD3. Interacts with TPC1. Ubiquitinated by HECTD3. In terms of tissue distribution, highly expressed in heart. Also found in brain, kidney, liver, lung, placenta, skeletal muscle, spleen and pancreas.

Its subcellular location is the membrane. In terms of biological role, vesicle trafficking protein that functions in the early secretory pathway, possibly by mediating retrograde transport from cis-Golgi membranes to the ER. The protein is Syntaxin-8 (STX8) of Homo sapiens (Human).